The sequence spans 153 residues: uncharacterized protein (153 aa).

Residues 16-40 (DEQTPLLNNDGIQRTPPSAEADMSL) are disordered. Residues 20–31 (PLLNNDGIQRTP) are compositionally biased toward polar residues.

This is an uncharacterized protein from Schizosaccharomyces pombe (strain 972 / ATCC 24843) (Fission yeast).